We begin with the raw amino-acid sequence, 194 residues long: Ion-translocating oxidoreductase complex subunit B (194 aa).

Residues methionine 1 to serine 26 are hydrophobic. The region spanning glutamate 32 to arginine 90 is the 4Fe-4S domain. Positions 49, 52, 57, 73, 116, 119, 122, 126, 146, 149, 152, and 156 each coordinate [4Fe-4S] cluster. 4Fe-4S ferredoxin-type domains are found at residues lysine 107–lysine 136 and leucine 137–valine 166.

Belongs to the 4Fe4S bacterial-type ferredoxin family. RnfB subfamily. As to quaternary structure, the complex is composed of six subunits: RnfA, RnfB, RnfC, RnfD, RnfE and RnfG. [4Fe-4S] cluster is required as a cofactor.

It localises to the cell inner membrane. Functionally, part of a membrane-bound complex that couples electron transfer with translocation of ions across the membrane. The chain is Ion-translocating oxidoreductase complex subunit B from Alcanivorax borkumensis (strain ATCC 700651 / DSM 11573 / NCIMB 13689 / SK2).